The sequence spans 58 residues: Galectin-1 (58 aa).

The 57-residue stretch at 2–58 (GITXTSLHVAPGARLAVKGDIPAGAKSWVINLGKGENDIMLHFNARFDAHGDIRTIV) folds into the Galectin domain. Residues 43–47 (HFNAR) and His-51 contribute to the a beta-D-galactoside site.

In terms of assembly, monomer. In terms of tissue distribution, detected in most tissues, most abundantly in skin.

Its subcellular location is the secreted. It localises to the extracellular space. The protein localises to the extracellular matrix. Functionally, may regulate cell apoptosis and cell differentiation. Binds beta-galactoside and a wide array of complex carbohydrates. The polypeptide is Galectin-1 (Podarcis hispanicus (Iberian wall lizard)).